Consider the following 311-residue polypeptide: p-hydroxybenzoic acid efflux pump subunit AaeA (311 aa).

Residues V11–F31 traverse the membrane as a helical segment.

It belongs to the membrane fusion protein (MFP) (TC 8.A.1) family.

It is found in the cell inner membrane. Forms an efflux pump with AaeB. The protein is p-hydroxybenzoic acid efflux pump subunit AaeA of Yersinia pseudotuberculosis serotype O:3 (strain YPIII).